Here is a 655-residue protein sequence, read N- to C-terminus: Integrin beta-5 (655 aa).

The VWFA domain maps to 1–234; sequence DLSLSMKDDL…QLIINAYNSI (234 aa). The Extracellular portion of the chain corresponds to 1–575; it reads DLSLSMKDDL…REPECGNTPN (575 aa). Positions 3 and 5 each coordinate Mg(2+). Ca(2+) is bound by residues Ser-5, Asp-8, Asp-9, and Asp-40. A disulfide bridge connects residues Cys-58 and Cys-67. Positions 98, 100, 102, and 103 each coordinate Ca(2+). Position 103 (Glu-103) interacts with Mg(2+). Cys-115 and Cys-156 are joined by a disulfide. N-linked (GlcNAc...) asparagine glycosylation occurs at Asn-203. Gly-218 serves as a coordination point for Ca(2+). 13 disulfide bridges follow: Cys-257–Cys-269, Cys-289–Cys-317, Cys-321–Cys-340, Cys-332–Cys-343, Cys-345–Cys-354, Cys-356–Cys-386, Cys-369–Cys-384, Cys-378–Cys-389, Cys-391–Cys-404, Cys-406–Cys-427, Cys-411–Cys-425, Cys-419–Cys-430, and Cys-432–Cys-441. Asn-316 carries N-linked (GlcNAc...) asparagine glycosylation. I-EGF domains lie at 321-355, 356-405, 406-442, and 443-482; these read CSVG…TRCE, CQDG…PFCE, CDNF…DNCN, and CSTD…EMCE. Asn-408 carries N-linked (GlcNAc...) asparagine glycosylation. Asn-442 carries N-linked (GlcNAc...) asparagine glycosylation. Cystine bridges form between Cys-443–Cys-466, Cys-450–Cys-464, Cys-458–Cys-469, Cys-471–Cys-481, Cys-484–Cys-487, Cys-491–Cys-538, Cys-497–Cys-517, Cys-500–Cys-513, and Cys-546–Cys-570. Residues Asn-510 and Asn-561 are each glycosylated (N-linked (GlcNAc...) asparagine). The chain crosses the membrane as a helical span at residues 576 to 598; it reads AMTILLAVVGSILLVGLALLAIW. At 599–655 the chain is on the cytoplasmic side; that stretch reads KLLVTIHDRREFAKFQSERSRARYEMASNPLYRKPISTHTVDFTFNKFNKSYNGTVD. Residue Ser-626 is modified to Phosphoserine.

This sequence belongs to the integrin beta chain family. In terms of assembly, heterodimer of an alpha and a beta subunit. Beta-5 (ITGB5) associates with alpha-V (ITGAV). Interacts with MYO10. Interacts with DAB2. Integrin ITGAV:ITGB5 interacts with FBLN5 (via N-terminus). ITGAV:ITGB5 interacts with CCN3. Interacts with tensin TNS3; TNS3 also interacts with PEAK1, thus acting as an adapter molecule to bridge the association of PEAK1 with ITGB5.

Its subcellular location is the cell membrane. Its function is as follows. Integrin alpha-V/beta-5 (ITGAV:ITGB5) is a receptor for fibronectin. It recognizes the sequence R-G-D in its ligand. The polypeptide is Integrin beta-5 (ITGB5) (Papio cynocephalus (Yellow baboon)).